Consider the following 383-residue polypeptide: DNA dC-&gt;dU-editing enzyme APOBEC-3G (383 aa).

The tract at residues 1 to 60 is essential for cytoplasmic localization; sequence MKPHFRNTVERMYRGTFFYNFNNRPILSRRNTVWLCYEVKTRGPSMPTWGAKIFRGQLYP. CMP/dCMP-type deaminase domains follow at residues 29–138 and 214–327; these read RRNT…LRIL and GQRE…LRTL. Thr-32 carries the post-translational modification Phosphothreonine; by PKA. Zn(2+) contacts are provided by His-65, Cys-97, and Cys-100. The interval 209–335 is necessary for homooligomerization; that stretch reads KPWVSGQRET…TLHRDGAKIA (127 aa). Residues 213–215 are interaction with DNA; it reads SGQ. Thr-218 carries the phosphothreonine; by PKA and CAMK2 modification. Position 257 (His-257) interacts with Zn(2+). The Proton donor role is filled by Glu-259. Zn(2+) contacts are provided by Cys-287 and Cys-290. The tract at residues 312 to 319 is interaction with DNA; it reads RIYDDQGR.

The protein belongs to the cytidine and deoxycytidylate deaminase family. As to quaternary structure, homodimer. Homooligomer. Can bind RNA to form ribonucleoprotein complexes of high-molecular-mass (HMM) or low-molecular-mass (LMM). HMM is inactive and heterogeneous in protein composition because of binding nonselectively to cellular RNAs, which in turn are associated with variety of cellular proteins. The LMM form which is enzymatically active has few or no RNAs associated. Its ability to form homooligomer is distinct from its ability to assemble into HMM. Interacts with APOBEC3B, APOBEC3F, MOV10, AGO2, EIF4E, EIF4ENIF1, DCP2 and DDX6 in an RNA-dependent manner. Interacts with AGO1, AGO3 and PKA/PRKACA. Requires Zn(2+) as cofactor.

The protein localises to the cytoplasm. It localises to the nucleus. The protein resides in the P-body. The enzyme catalyses a 2'-deoxycytidine in single-stranded DNA + H2O + H(+) = a 2'-deoxyuridine in single-stranded DNA + NH4(+). DNA deaminase (cytidine deaminase) which acts as an inhibitor of retrovirus replication and retrotransposon mobility. After the penetration of retroviral nucleocapsids into target cells of infection and the initiation of reverse transcription, it can induce the conversion of cytosine to uracil in the minus-sense single-strand viral DNA, leading to G-to-A hypermutations in the subsequent plus-strand viral DNA. The resultant detrimental levels of mutations in the proviral genome, along with a deamination-independent mechanism that works prior to the proviral integration, together exert efficient antiretroviral effects in infected target cells. Selectively targets single-stranded DNA and does not deaminate double-stranded DNA or single- or double-stranded RNA. This Erythrocebus patas (Red guenon) protein is DNA dC-&gt;dU-editing enzyme APOBEC-3G (APOBEC3G).